The chain runs to 364 residues: GTPase Obg (364 aa).

The Obg domain occupies 1–159 (MKFLDEAKVY…KTIWLHLKLI (159 aa)). An OBG-type G domain is found at 160–327 (ADAGLVGLPN…VLRALRDIIV (168 aa)). GTP is bound by residues 166 to 173 (GLPNAGKS), 191 to 195 (FTTLH), 212 to 215 (DIPG), 279 to 282 (SQID), and 308 to 310 (SAV). Mg(2+)-binding residues include Ser173 and Thr193. Residues 333 to 364 (EKPAKVPKLRHRDMVVTDEGEDKGGDEGDDQP) form a disordered region.

It belongs to the TRAFAC class OBG-HflX-like GTPase superfamily. OBG GTPase family. As to quaternary structure, monomer. It depends on Mg(2+) as a cofactor.

Its subcellular location is the cytoplasm. In terms of biological role, an essential GTPase which binds GTP, GDP and possibly (p)ppGpp with moderate affinity, with high nucleotide exchange rates and a fairly low GTP hydrolysis rate. Plays a role in control of the cell cycle, stress response, ribosome biogenesis and in those bacteria that undergo differentiation, in morphogenesis control. In Rhizobium johnstonii (strain DSM 114642 / LMG 32736 / 3841) (Rhizobium leguminosarum bv. viciae), this protein is GTPase Obg.